The following is a 399-amino-acid chain: Phosphoglycerate kinase (399 aa).

Substrate contacts are provided by residues aspartate 22–asparagine 24, arginine 38, histidine 61–arginine 64, arginine 120, and arginine 153. ATP is bound by residues lysine 206, glycine 297, glutamate 328, and glycine 354–threonine 357.

Belongs to the phosphoglycerate kinase family. Monomer.

The protein resides in the cytoplasm. It catalyses the reaction (2R)-3-phosphoglycerate + ATP = (2R)-3-phospho-glyceroyl phosphate + ADP. It functions in the pathway carbohydrate degradation; glycolysis; pyruvate from D-glyceraldehyde 3-phosphate: step 2/5. This is Phosphoglycerate kinase from Campylobacter concisus (strain 13826).